The primary structure comprises 279 residues: Ribose-phosphate pyrophosphokinase (279 aa).

Residues 31–33 (DGE) and 88–89 (RQ) contribute to the ATP site. The Mg(2+) site is built by histidine 121 and aspartate 159. The active site involves lysine 182. Residues arginine 184, aspartate 208, and 212 to 216 (STGGT) contribute to the D-ribose 5-phosphate site.

The protein belongs to the ribose-phosphate pyrophosphokinase family. Class III (archaeal) subfamily. It depends on Mg(2+) as a cofactor.

It is found in the cytoplasm. It catalyses the reaction D-ribose 5-phosphate + ATP = 5-phospho-alpha-D-ribose 1-diphosphate + AMP + H(+). Its pathway is metabolic intermediate biosynthesis; 5-phospho-alpha-D-ribose 1-diphosphate biosynthesis; 5-phospho-alpha-D-ribose 1-diphosphate from D-ribose 5-phosphate (route I): step 1/1. In terms of biological role, involved in the biosynthesis of the central metabolite phospho-alpha-D-ribosyl-1-pyrophosphate (PRPP) via the transfer of pyrophosphoryl group from ATP to 1-hydroxyl of ribose-5-phosphate (Rib-5-P). The sequence is that of Ribose-phosphate pyrophosphokinase from Pyrococcus furiosus (strain ATCC 43587 / DSM 3638 / JCM 8422 / Vc1).